The primary structure comprises 203 residues: Small ribosomal subunit protein uS4c (203 aa).

The S4 RNA-binding domain occupies 92 to 150 (MRLDNIIYRLGMAPTIANARQLVNHGHIVVNDRIVTIPSYRCKPKDIISVRNNSTSRNV).

Belongs to the universal ribosomal protein uS4 family. Part of the 30S ribosomal subunit. Contacts protein S5. The interaction surface between S4 and S5 is involved in control of translational fidelity.

It localises to the plastid. The protein localises to the chloroplast. In terms of biological role, one of the primary rRNA binding proteins, it binds directly to 16S rRNA where it nucleates assembly of the body of the 30S subunit. Its function is as follows. With S5 and S12 plays an important role in translational accuracy. This chain is Small ribosomal subunit protein uS4c (rps4), found in Chlorokybus atmophyticus (Soil alga).